Here is a 433-residue protein sequence, read N- to C-terminus: tRNA-2-methylthio-N(6)-dimethylallyladenosine synthase (433 aa).

The MTTase N-terminal domain occupies 3-118 (KKLFIQTLGC…ISRVIHQEKA (116 aa)). Residues Cys12, Cys49, Cys81, Cys150, Cys154, and Cys157 each contribute to the [4Fe-4S] cluster site. Residues 136–369 (SRNDYKAMVN…QARHKEILEE (234 aa)) enclose the Radical SAM core domain. Positions 372–433 (QKEVGAIHSV…YRAFLIGEPL (62 aa)) constitute a TRAM domain.

The protein belongs to the methylthiotransferase family. MiaB subfamily. In terms of assembly, monomer. The cofactor is [4Fe-4S] cluster.

Its subcellular location is the cytoplasm. It carries out the reaction N(6)-dimethylallyladenosine(37) in tRNA + (sulfur carrier)-SH + AH2 + 2 S-adenosyl-L-methionine = 2-methylsulfanyl-N(6)-dimethylallyladenosine(37) in tRNA + (sulfur carrier)-H + 5'-deoxyadenosine + L-methionine + A + S-adenosyl-L-homocysteine + 2 H(+). In terms of biological role, catalyzes the methylthiolation of N6-(dimethylallyl)adenosine (i(6)A), leading to the formation of 2-methylthio-N6-(dimethylallyl)adenosine (ms(2)i(6)A) at position 37 in tRNAs that read codons beginning with uridine. In Wolinella succinogenes (strain ATCC 29543 / DSM 1740 / CCUG 13145 / JCM 31913 / LMG 7466 / NCTC 11488 / FDC 602W) (Vibrio succinogenes), this protein is tRNA-2-methylthio-N(6)-dimethylallyladenosine synthase.